We begin with the raw amino-acid sequence, 321 residues long: Phospholipid phosphatase-related protein type 5 (321 aa).

6 consecutive transmembrane segments (helical) span residues 10–30, 62–82, 122–142, 196–213, 225–245, and 252–272; these read SSMLYFQMVIMAGTVMLAYYF, AVPPVLLYSLAAGVPVLVIIV, FLGIYTFGLFATDIFVNAGQV, AALSVYAAMYLTMYITNT, VLCLGLMCLAFLTGLNRVAEY, and VIAGFLVGISIAVFLVVCVVN.

This sequence belongs to the PA-phosphatase related phosphoesterase family. In terms of tissue distribution, isoform 1 is expressed in brain, lung, kidney and colon. Isoform 2 is expressed in placenta, skeletal muscle and kidney.

It localises to the cell membrane. Functionally, induces filopodia formation and promotes neurite growth in a CDC42-independent manner; impedes neurite growth inhibitory-mediated axonal retraction. This chain is Phospholipid phosphatase-related protein type 5, found in Homo sapiens (Human).